The following is a 132-amino-acid chain: Intraflagellar transport protein 20 homolog (132 aa).

Residues 87–114 (EAQQQQLYALIAEKKMQLERYRIEYEAL) adopt a coiled-coil conformation.

The protein resides in the golgi apparatus. It is found in the cis-Golgi network. It localises to the cytoplasm. The protein localises to the cytoskeleton. Its subcellular location is the microtubule organizing center. The protein resides in the centrosome. It is found in the centriole. It localises to the cell projection. The protein localises to the cilium. Its subcellular location is the cytoplasmic vesicle. The protein resides in the secretory vesicle. It is found in the acrosome. Functionally, involved in ciliary process assembly. May play a role in the trafficking of ciliary membrane proteins from the Golgi complex to the cilium. Regulates the platelet-derived growth factor receptor-alpha (PDGFRA) signaling pathway. Plays an important role in spermatogenesis, particularly spermiogenesis, when germ cells form flagella. The polypeptide is Intraflagellar transport protein 20 homolog (ift20) (Xenopus tropicalis (Western clawed frog)).